The chain runs to 459 residues: Protein FAM90A27P (459 aa).

Residues 1–10 (MARHSVHHQA) show a composition bias toward basic residues. Disordered stretches follow at residues 1–41 (MARH…ESRV), 74–136 (SHKE…WKEP), 153–239 (HTTK…ALQP), and 259–459 (PDAD…SDSD). Residues 125–136 (PQEKMQEAWKEP) are compositionally biased toward basic and acidic residues. The segment covering 184–194 (HNDSPQLSTCG) has biased composition (polar residues). The segment covering 341–353 (KATAETAATKTAT) has biased composition (low complexity). The span at 415–427 (PPENSASAQSPRF) shows a compositional bias: polar residues.

The protein belongs to the FAM90 family.

The protein is Protein FAM90A27P (FAM90A27P) of Homo sapiens (Human).